We begin with the raw amino-acid sequence, 195 residues long: Apoptosis-associated speck-like protein containing a CARD (195 aa).

Residues 1–91 (MGRARDAILD…AGQLQAATHQ (91 aa)) form the Pyrin domain. Residues K55 and K174 each participate in a glycyl lysine isopeptide (Lys-Gly) (interchain with G-Cter in ubiquitin) cross-link. In terms of domain architecture, CARD spans 107–195 (AAKPGLHFID…SYLVEDLERS (89 aa)). S195 carries the post-translational modification Phosphoserine.

As to quaternary structure, self-associates; enforced oligomerization induces apoptosis, NF-kappa-B regulation and interleukin-1 beta secretion. Homooligomers can form disk-like particles of approximately 12 nm diameter and approximately 1 nm height. Next to isoform 1, also isoform 2 and isoform 3 may be involved in oligomerization leading to functional regulation. Component of several inflammasomes containing one pattern recognition receptor/sensor, such as NLRP1, NLRP2, NLRP3, NLRP6, NLRC4, AIM2, MEFV or NOD2, and probably NLRC4, NLRP12 or IFI16. Major component of the ASC pyroptosome, a 1-2 um supramolecular assembly (one per macrophage cell) which consists of oligomerized PYCARD dimers and CASP1. Interacts with CASP1 (precursor form); the interaction induces activation of CASP1 leading to the processing of interleukin-1 beta; PYCARD competes with RIPK2 for binding to CASP1. Interacts with NLRP3; the interaction requires the homooligomerization of NLRP3. Interacts with NLRP2, NLRC4, MEFV, CARD16, AIM2, IFI16, NOD2, RIGI, RIPK2, PYDC1, PYDC2, NLRP10, CASP8, CHUK, IKBKB and BAX. Component of the AIM2 PANoptosome complex, a multiprotein complex that drives inflammatory cell death (PANoptosis). In terms of processing, phosphorylated. 'Lys-63'-linked polyubiquitination by TRAF3 is critical for speck formation and inflammasome activation. 'Lys-63'-linked deubiquitinated by USP50; a crucial step for NLRP3-mediated inflammasome activation. 'Lys-63'-linked polyubiquitination by PELI1 is also critical for speck formation and inflammasome activation. Deubiquitinated by USP3 that cleaves 'Lys-48'-linked ubiquitin chains and strengthens its stability by blocking proteasomal degradation. Widely expressed at low levels. Detected in peripheral blood leukocytes, lung, small intestine, spleen, thymus, colon and at lower levels in placenta, liver and kidney. Very low expression in skeletal muscle, heart and brain. Expressed in lung epithelial cells (at protein level). Detected in the leukemia cell lines HL-60 and U-937, but not in Jurkat T-cell lymphoma and Daudi Burkitt's lymphoma. Detected in the melanoma cell line WM35, but not in WM793. Not detected in HeLa cervical carcinoma cells and MOLT-4 lymphocytic leukemia cells.

It localises to the cytoplasm. It is found in the inflammasome. Its subcellular location is the endoplasmic reticulum. The protein resides in the mitochondrion. The protein localises to the nucleus. It localises to the golgi apparatus membrane. Functionally, functions as a key mediator in apoptosis and inflammation. Promotes caspase-mediated apoptosis involving predominantly caspase-8 and also caspase-9 in a probable cell type-specific manner. Involved in activation of the mitochondrial apoptotic pathway, promotes caspase-8-dependent proteolytic maturation of BID independently of FADD in certain cell types and also mediates mitochondrial translocation of BAX and activates BAX-dependent apoptosis coupled to activation of caspase-9, -2 and -3. Involved in innate immune response by acting as an integral adapter in the assembly of various inflammasomes (NLRP1, NLRP2, NLRP3, NLRP6, AIM2 and probably IFI16) which recruit and activate caspase-1 leading to processing and secretion of pro-inflammatory cytokines. Caspase-1-dependent inflammation leads to macrophage pyroptosis, a form of cell death. The function as activating adapter in different types of inflammasomes is mediated by the pyrin and CARD domains and their homotypic interactions. Clustered PYCARD nucleates the formation of caspase-1 filaments through the interaction of their respective CARD domains, acting as a platform for of caspase-1 polymerization. In the NLRP1 and NLRC4 inflammasomes seems not be required but facilitates the processing of procaspase-1. In cooperation with NOD2 involved in an inflammasome activated by bacterial muramyl dipeptide leading to caspase-1 activation. May be involved in RIGI-triggered pro-inflammatory responses and inflammasome activation. In collaboration with AIM2 which detects cytosolic double-stranded DNA may also be involved in a caspase-1-independent cell death that involves caspase-8. In adaptive immunity may be involved in maturation of dendritic cells to stimulate T-cell immunity and in cytoskeletal rearrangements coupled to chemotaxis and antigen uptake may be involved in post-transcriptional regulation of the guanine nucleotide exchange factor DOCK2; the latter function is proposed to involve the nuclear form. Also involved in transcriptional activation of cytokines and chemokines independent of the inflammasome; this function may involve AP-1, NF-kappa-B, MAPK and caspase-8 signaling pathways. For regulation of NF-kappa-B activating and inhibiting functions have been reported. Modulates NF-kappa-B induction at the level of the IKK complex by inhibiting kinase activity of CHUK and IKBK. Proposed to compete with RIPK2 for association with CASP1 thereby down-regulating CASP1-mediated RIPK2-dependent NF-kappa-B activation and activating interleukin-1 beta processing. Modulates host resistance to DNA virus infection, probably by inducing the cleavage of and inactivating CGAS in presence of cytoplasmic double-stranded DNA. May have a regulating effect on the function as inflammasome adapter. In terms of biological role, seems to inhibit inflammasome-mediated maturation of interleukin-1 beta. This is Apoptosis-associated speck-like protein containing a CARD from Homo sapiens (Human).